Consider the following 885-residue polypeptide: Dipeptidyl peptidase 9 (885 aa).

Active-site charge relay system residues include Ser752, Asp830, and His862. A Val-boroPro-binding site is contributed by Ser752.

This sequence belongs to the peptidase S9B family. DPPIV subfamily. In terms of assembly, homodimer. Forms a ternary complex with NLRP1, composed of a DPP9 homodimer, one full-length NLRP1 protein, and one cleaved C-terminus of NLRP1 (NACHT, LRR and PYD domains-containing protein 1, C-terminus).

It is found in the nucleus. It catalyses the reaction Release of an N-terminal dipeptide, Xaa-Yaa-|-Zaa-, from a polypeptide, preferentially when Yaa is Pro, provided Zaa is neither Pro nor hydroxyproline.. Dipeptidyl peptidase that cleaves off N-terminal dipeptides from proteins having a Pro or Ala residue at position 2. Acts as a key inhibitor of the NLRP1 inflammasome. This is Dipeptidyl peptidase 9 from Danio rerio (Zebrafish).